Here is a 77-residue protein sequence, read N- to C-terminus: Large ribosomal subunit protein bL28 (77 aa).

The segment at Met-1–His-20 is disordered.

Belongs to the bacterial ribosomal protein bL28 family.

The protein is Large ribosomal subunit protein bL28 of Pseudomonas fluorescens (strain Pf0-1).